The following is a 463-amino-acid chain: T-box transcription factor TBX1-B (463 aa).

2 disordered regions span residues 39-58 and 75-102; these read SPSPGDPYSQHEPHYEPCSA and GASSSSCASSTPGSGSTGSSSGNKAPVK. Low complexity predominate over residues 75–96; that stretch reads GASSSSCASSTPGSGSTGSSSG. A DNA-binding region (T-box) is located at residues 119–297; it reads LWDEFNQLGT…SNPFAKGFRD (179 aa). Disordered regions lie at residues 320-343 and 367-406; these read RSRNPVSSPPQNGSDKDGDGRREY and SPSLPVPGGLVPLSTGRPSPPHELRLDPHSQGSEPLHHHP. Residues 323–332 are compositionally biased toward polar residues; it reads NPVSSPPQNG. The span at 333-343 shows a compositional bias: basic and acidic residues; that stretch reads SDKDGDGRREY. Over residues 367 to 380 the composition is skewed to low complexity; that stretch reads SPSLPVPGGLVPLS. The Nuclear localization signal signature appears at 420–431; it reads KTRPAPYPLPSI.

In terms of assembly, binds DNA as a dimer. Interacts with dscr6/ripply3.

It localises to the nucleus. Functionally, probable transcriptional regulator involved in developmental processes. Binds to the palindromic T site 5'-TTCACACCTAGGTGTGAA-3' DNA sequence. Induces pre-placodal ectoderm (PPE) gene expression in regions where RIPPLY3 is absent. Plays a role in the formation of the anteroposterior (AP) axis during embryonic development; required to establish the posterolateral border of the pre-placodal ectoderm (PPE) acting downstream of the retinoic acid receptor (RAR) signaling. In terms of biological role, probable transcriptional regulator involved in developmental processes. Binds to the palindromic T site 5'-TTCACACCTAGGTGTGAA-3' DNA sequence. Is required for normal development of the pharyngeal arch arteries. This is T-box transcription factor TBX1-B (tbx1-b) from Xenopus laevis (African clawed frog).